Consider the following 234-residue polypeptide: Filarial antigen Av33 (234 aa).

The first 17 residues, 1–17 (MKILSCLLLCTITVLEG), serve as a signal peptide directing secretion. Cysteine 135 and cysteine 230 are disulfide-bonded. The interval 204 to 234 (TSQASEATTIPTTTQTPVEAPETPSFCVPIY) is disordered. Residues 211–220 (TTIPTTTQTP) are compositionally biased toward low complexity.

Belongs to the protease inhibitor I33 family.

The protein localises to the secreted. Aspartyl protease inhibitor. The polypeptide is Filarial antigen Av33 (Acanthocheilonema viteae (Filarial nematode worm)).